The chain runs to 521 residues: MHMQFQLPGRRRRHRTTWIEWVLVHKSARSGGELKAVMEDSDRKRHCWQCRRSCVVCDFTQPGCQRCSAAGVSCPGYSDIEPRKLKWLAPGKVLSRNHKANKAHLVRKSTTIATASAQAVEPKISDWNMRYNACILEDLTPIHELGRHPYIHHVSPERLKEAILVPEFLRSGLICMTLNHRMNRLGIRSNPGATDLVEKYYIHWGITIRSLSEQFNVENKRTSDVVIAGILTILLGDIQNGAQVSWLHHLDGIHKLVSLRGGFRALAPSQRLAPLLNCLWFIGIITNTTCPASYLNLSTISHFEASDFMQEHYSFASTPTQMFPPQLLAEVSKINYLRLQAKSKKEYRDEHLSKDAYNILESIEAFSPEESAQSKFSSKEDWMRIGTVYRSATALYCILSLQSVSVLPEDSALRTRCVIHGQVLLRHLPESLSSARTKRFMLWPLVLLGVEAVHSDMATRAFVSKQLPELSRSVGTSIPLTAQSVLESFWASGLKLWDACFDRPYPFTMQIAVDVSQVSTP.

A DNA-binding region (zn(2)-C6 fungal-type) is located at residues 46 to 76 (HCWQCRRSCVVCDFTQPGCQRCSAAGVSCPG).

The protein localises to the nucleus. Transcriptional regulator; part of the gene cluster that mediates the biosynthesis of phomenoic acid, a long chain aliphatic carboxylic acid that does not appear to be essential for pathogenicity but may play a role in allowing to outcompete other fungi in the environmental niche via its antifungal properties. Positively regulates the expression of the cluster and subsequent production of phomenoic acid. The sequence is that of Phomenoic acid biosynthesis cluster-specific transcriptional regulator from Leptosphaeria maculans (strain JN3 / isolate v23.1.3 / race Av1-4-5-6-7-8) (Blackleg fungus).